The following is a 285-amino-acid chain: VQ motif-containing protein 20 (285 aa).

Basic and acidic residues predominate over residues 1–10 (MSSTYKDNHP). The tract at residues 1-68 (MSSTYKDNHP…PSPSSFSSAA (68 aa)) is disordered. The segment covering 11-23 (YHHHPHHHHHHPK) has biased composition (basic residues). Positions 91–100 (FMALVQKLTG) match the VQ motif. Residues 195-218 (YSAVAIPPQPPPHPPPPPPPPSMY) form a disordered region. Positions 201 to 216 (PPQPPPHPPPPPPPPS) are enriched in pro residues.

It is found in the nucleus. May function as negative regulator of plant defense. The protein is VQ motif-containing protein 20 of Arabidopsis thaliana (Mouse-ear cress).